The following is a 187-amino-acid chain: UPF0301 protein YqgE (187 aa).

It belongs to the UPF0301 (AlgH) family.

The protein is UPF0301 protein YqgE of Salmonella agona (strain SL483).